We begin with the raw amino-acid sequence, 805 residues long: N-(5-amino-5-carboxypentanoyl)-L-cysteinyl-D-valine synthase (805 aa).

The segment at 783-805 is disordered; it reads PDTGGGAVGSTTTGGVRGELREI.

It belongs to the ATP-dependent AMP-binding enzyme family. It depends on pantetheine 4'-phosphate as a cofactor.

The catalysed reaction is L-2-aminoadipate + L-valine + L-cysteine + 3 ATP + H2O = N-[(5S)-5-amino-5-carboxypentanoyl]-L-cysteinyl-D-valine + 3 AMP + 3 diphosphate + 3 H(+). Its pathway is antibiotic biosynthesis; penicillin G biosynthesis; penicillin G from L-alpha-aminoadipate and L-cysteine and L-valine: step 1/3. Each of the constituent amino acids of ACV are activated as aminoacyl-adenylates with peptide bonds formed through the participation of amino acid thioester intermediates. This Streptomyces clavuligerus protein is N-(5-amino-5-carboxypentanoyl)-L-cysteinyl-D-valine synthase (pcbAB).